We begin with the raw amino-acid sequence, 1011 residues long: Vacuolar membrane protease (1011 aa).

The Cytoplasmic segment spans residues 1–14 (MKLTKAVFRFRRTN). Residues 15–35 (LSTLLVITYLVITTLYVWDHF) form a helical membrane-spanning segment. Residues 36 to 352 (RYHFTLPSDY…WFVVWSARSL (317 aa)) are Vacuolar-facing. Zn(2+) is bound by residues histidine 149, aspartate 161, glutamate 194, glutamate 219, and histidine 293. A helical transmembrane segment spans residues 353–373 (FYWNCIILALFPSILAILFLV). Residues 374–390 (AYDMQLLKFNFWDAMLR) are Cytoplasmic-facing. A helical transmembrane segment spans residues 391-411 (LPVSVCLAYFCVKLFQVLVGQ). Over 412–420 (LNPYVFSRD) the chain is Vacuolar. A helical membrane pass occupies residues 421 to 441 (YVSPILAEASMFIFMNYVILS). The Cytoplasmic portion of the chain corresponds to 442–451 (SWERLRPLRD). The chain crosses the membrane as a helical span at residues 452–472 (FKTVALVEVSMVLWIYLISVT). Residues 473–487 (RWLRDSDYTATGLYP) lie on the Vacuolar side of the membrane. The chain crosses the membrane as a helical span at residues 488–508 (FTIGYTFVSIGAIIGVFCATF). Residues 509–647 (KAKLNPEDDS…SILNYDWSIQ (139 aa)) are Cytoplasmic-facing. Positions 534–585 (MQHQYQQHSQKHSNQHSPHHSTHHSAQHSVHHSPRQSIHQVPSSEQRQRDAS) are disordered. Over residues 542–567 (SQKHSNQHSPHHSTHHSAQHSVHHSP) the composition is skewed to basic residues. A compositionally biased stretch (polar residues) spans 568-578 (RQSIHQVPSSE). Residues 648 to 668 (FMVVTPWVTYFTWICLDLIMG) traverse the membrane as a helical segment. Residues 669–681 (AMNQTIQESAKGT) are Vacuolar-facing. Asparagine 671 carries N-linked (GlcNAc...) asparagine glycosylation. A helical membrane pass occupies residues 682 to 702 (TFVTHMALIGSLLLSLPMLPF). At 703–708 (TYKLHS) the chain is on the cytoplasmic side. The chain crosses the membrane as a helical span at residues 709 to 729 (FAGMLFLLLAVTTAVWTIVAP). Residues 730 to 1011 (PFTESSPLKL…MVSVTKYVEL (282 aa)) lie on the Vacuolar side of the membrane. N-linked (GlcNAc...) asparagine glycans are attached at residues asparagine 751, asparagine 825, and asparagine 854.

The protein belongs to the peptidase M28 family. Zn(2+) serves as cofactor.

The protein localises to the vacuole membrane. May be involved in vacuolar sorting and osmoregulation. This Eremothecium gossypii (strain ATCC 10895 / CBS 109.51 / FGSC 9923 / NRRL Y-1056) (Yeast) protein is Vacuolar membrane protease.